The primary structure comprises 410 residues: Phospho-N-acetylmuramoyl-pentapeptide-transferase (410 aa).

The next 10 helical transmembrane spans lie at 27-47 (RMIL…PYFI), 77-97 (TPTM…VLWM), 99-119 (LTHI…LIGG), 140-160 (LFFQ…SSVN), 213-233 (PVVT…FFVI), 248-268 (GLLA…AFVS), 288-308 (IAIY…YNGY), 312-332 (VFMG…SAVL), 337-357 (FLLG…ILQV), and 389-409 (VIRF…SLKF).

This sequence belongs to the glycosyltransferase 4 family. MraY subfamily. Mg(2+) serves as cofactor.

It localises to the cell inner membrane. It catalyses the reaction UDP-N-acetyl-alpha-D-muramoyl-L-alanyl-gamma-D-glutamyl-meso-2,6-diaminopimeloyl-D-alanyl-D-alanine + di-trans,octa-cis-undecaprenyl phosphate = di-trans,octa-cis-undecaprenyl diphospho-N-acetyl-alpha-D-muramoyl-L-alanyl-D-glutamyl-meso-2,6-diaminopimeloyl-D-alanyl-D-alanine + UMP. It participates in cell wall biogenesis; peptidoglycan biosynthesis. Functionally, catalyzes the initial step of the lipid cycle reactions in the biosynthesis of the cell wall peptidoglycan: transfers peptidoglycan precursor phospho-MurNAc-pentapeptide from UDP-MurNAc-pentapeptide onto the lipid carrier undecaprenyl phosphate, yielding undecaprenyl-pyrophosphoryl-MurNAc-pentapeptide, known as lipid I. This Protochlamydia amoebophila (strain UWE25) protein is Phospho-N-acetylmuramoyl-pentapeptide-transferase.